The chain runs to 337 residues: MSPSADTPEISNSADSTVLSLKKSLCSEDSPLPIRFRALFSLKHVATTADDDATRVAAIEAIAAGFASPSALLKHELAYCLGQTGNTAAVKPLRQVLSDLKEDPMCRHEAAEALGALGWADNLDILREYRDRKEEDISIVETCEIAIERIEWENSAERQKEKLRPSDFASIDPAPPMPESDKEAEVEDLGRKLMDTNADLFSRYRAMFALRDLASPPDLPTATPAVLALAKGLSDSSALFRHEIAFVFGQLSHPASIPALTEALSNTNEASMVRHEAAEALGSLGEKDGVEDTLRKFLHDKEKVVRESCIVALDIAEYEKGEDAEYALIPESAGAAA.

HEAT-like PBS-type repeat units lie at residues 73 to 99 and 106 to 132; these read LKHELAYCLGQTGNTAAVKPLRQVLSD and CRHEAAEALGALGWADNLDILREYRDR. 4 residues coordinate Fe cation: H75, E76, H108, and E109. Positions 156-165 are enriched in basic and acidic residues; that stretch reads AERQKEKLRP. The interval 156-183 is disordered; sequence AERQKEKLRPSDFASIDPAPPMPESDKE. HEAT-like PBS-type repeat units follow at residues 202 to 235, 240 to 266, and 273 to 300; these read SRYRAMFALRDLASPPDLPTATPAVLALAKGLSD, FRHEIAFVFGQLSHPASIPALTEALSN, and VRHEAAEALGSLGEKDGVEDTLRKFLHD. Residues H242, E243, H275, and E276 each contribute to the Fe cation site.

It belongs to the deoxyhypusine hydroxylase family. Fe(2+) serves as cofactor.

Its subcellular location is the cytoplasm. It is found in the nucleus. It carries out the reaction [eIF5A protein]-deoxyhypusine + AH2 + O2 = [eIF5A protein]-hypusine + A + H2O. It functions in the pathway protein modification; eIF5A hypusination. Functionally, catalyzes the hydroxylation of the N(6)-(4-aminobutyl)-L-lysine intermediate to form hypusine, an essential post-translational modification only found in mature eIF-5A factor. This Gibberella zeae (strain ATCC MYA-4620 / CBS 123657 / FGSC 9075 / NRRL 31084 / PH-1) (Wheat head blight fungus) protein is Deoxyhypusine hydroxylase.